A 133-amino-acid chain; its full sequence is NADH dehydrogenase [ubiquinone] 1 alpha subcomplex subunit 6 (133 aa).

It belongs to the complex I LYR family. In terms of assembly, complex I is composed of at least 49 different subunits.

It localises to the mitochondrion inner membrane. Accessory subunit of the mitochondrial membrane respiratory chain NADH dehydrogenase (Complex I), that is believed to be not involved in catalysis. Complex I functions in the transfer of electrons from NADH to the respiratory chain. The immediate electron acceptor for the enzyme is believed to be ubiquinone. In Arabidopsis thaliana (Mouse-ear cress), this protein is NADH dehydrogenase [ubiquinone] 1 alpha subcomplex subunit 6.